We begin with the raw amino-acid sequence, 450 residues long: Folate synthesis bifunctional protein (450 aa).

Residues 1 to 166 form an HPPK region; sequence MTTWNFVCLG…TFAELAAIYP (166 aa). Residues 180 to 441 enclose the Pterin-binding domain; the sequence is TQIMGIVNVT…QVEGNRRVLA (262 aa). The tract at residues 182-450 is DHPS; that stretch reads IMGIVNVTDD…AAAAWSGMPV (269 aa). Mg(2+) is bound at residue Asn-187. (7,8-dihydropterin-6-yl)methyl diphosphate contacts are provided by residues Thr-227, Asp-267, Asn-287, Asp-358, Lys-395, and 429-431; that span reads RVH.

The protein in the C-terminal section; belongs to the DHPS family. It in the N-terminal section; belongs to the HPPK family. Mg(2+) serves as cofactor.

It carries out the reaction 6-hydroxymethyl-7,8-dihydropterin + ATP = (7,8-dihydropterin-6-yl)methyl diphosphate + AMP + H(+). The enzyme catalyses (7,8-dihydropterin-6-yl)methyl diphosphate + 4-aminobenzoate = 7,8-dihydropteroate + diphosphate. It participates in cofactor biosynthesis; tetrahydrofolate biosynthesis; 2-amino-4-hydroxy-6-hydroxymethyl-7,8-dihydropteridine diphosphate from 7,8-dihydroneopterin triphosphate: step 4/4. It functions in the pathway cofactor biosynthesis; tetrahydrofolate biosynthesis; 7,8-dihydrofolate from 2-amino-4-hydroxy-6-hydroxymethyl-7,8-dihydropteridine diphosphate and 4-aminobenzoate: step 1/2. The protein is Folate synthesis bifunctional protein (folKP) of Chlamydia muridarum (strain MoPn / Nigg).